Consider the following 205-residue polypeptide: Pre-rRNA-processing protein TSR2 (205 aa).

The disordered stretch occupies residues 144 to 205 (SKRVVHIEGD…LVQPKGRRKH (62 aa)). Residues 152–177 (GDDDEDDEDVEDYDDEDEDEEMDEVV) show a composition bias toward acidic residues.

Belongs to the TSR2 family. As to quaternary structure, interacts with RPS26A.

The protein localises to the cytoplasm. It localises to the nucleus. Functionally, required for 20S pre-rRNA processing. The protein is Pre-rRNA-processing protein TSR2 of Saccharomyces cerevisiae (strain ATCC 204508 / S288c) (Baker's yeast).